A 280-amino-acid chain; its full sequence is Pantothenate synthetase (280 aa).

31–38 (MGNLHVGH) lines the ATP pocket. His-38 acts as the Proton donor in catalysis. Residue Gln-62 participates in (R)-pantoate binding. Gln-62 serves as a coordination point for beta-alanine. 150–153 (GKKD) lines the ATP pocket. Residue Gln-156 participates in (R)-pantoate binding. ATP is bound by residues Val-179 and 187–190 (MSSR).

The protein belongs to the pantothenate synthetase family. In terms of assembly, homodimer.

Its subcellular location is the cytoplasm. It catalyses the reaction (R)-pantoate + beta-alanine + ATP = (R)-pantothenate + AMP + diphosphate + H(+). It participates in cofactor biosynthesis; (R)-pantothenate biosynthesis; (R)-pantothenate from (R)-pantoate and beta-alanine: step 1/1. Catalyzes the condensation of pantoate with beta-alanine in an ATP-dependent reaction via a pantoyl-adenylate intermediate. This Xanthomonas oryzae pv. oryzae (strain KACC10331 / KXO85) protein is Pantothenate synthetase.